The primary structure comprises 536 residues: Protein Rep68 (536 aa).

Residues 1–199 (MPGFYEIVIK…AQHLTHVSQT (199 aa)) form the PV NS1-Nuc domain. The a divalent metal cation site is built by glutamate 83, histidine 90, and histidine 92. An RCR-2 motif is present at residues 90-92 (HMH). Tyrosine 156 serves as the catalytic For nuclease activity. An RCR-3 motif is present at residues 156 to 160 (YLLPK). Polar residues predominate over residues 196 to 211 (VSQTQEQNKENQNPNS). Residues 196-216 (VSQTQEQNKENQNPNSDAPVI) form a disordered region. The SF3 helicase domain maps to 308–463 (DPQYAASVFL…LDHDFGKVTK (156 aa)). 334-341 (GPATTGKT) is an ATP binding site. The interval 488-536 (KGGAKKRPAPSDADISEPKRVRESVAQPSTSDAEASINYADRLARGHSL) is disordered.

Interacts with host TOPORS. Interacts with host KCTD5. The cofactor is a divalent metal cation.

It localises to the host nucleus. It carries out the reaction ATP + H2O = ADP + phosphate + H(+). Plays an essential role in the initiation of viral DNA synthesis. Binds specifically to an inverted terminal repeat element (ITR) on the 3' and 5' ends of the viral DNA, where it cleaves a site specifically to generate a priming site for initiation of the synthesis of a complementary strand. Also plays a role as transcriptional regulator, DNA helicase and as key factor in site-specific integration of the viral genome. Inhibits the host cell cycle G1/S and G2/M transitions. These arrests may provide essential cellular factors for viral DNA replication. The sequence is that of Protein Rep68 (Rep68) from Mammalia (AAV-2).